We begin with the raw amino-acid sequence, 828 residues long: Putative dual specificity tyrosine-phosphorylation-regulated kinase 3 homolog (828 aa).

Over residues 1 to 14 (MVGSQEKKNNHIEL) the composition is skewed to basic and acidic residues. Residues 1–26 (MVGSQEKKNNHIELSETPATDKNNLN) form a disordered region. Positions 17–26 (TPATDKNNLN) are enriched in polar residues. Positions 276-589 (YEMLKIIGKG…PSEALKHPWL (314 aa)) constitute a Protein kinase domain. ATP-binding positions include 282–290 (IGKGSFGQV) and Lys305. The Proton acceptor role is filled by Asp402. Ser616 bears the Phosphoserine mark.

It belongs to the protein kinase superfamily. CMGC Ser/Thr protein kinase family. MNB/DYRK subfamily. In terms of processing, autophosphorylated on tyrosine residues.

It catalyses the reaction L-seryl-[protein] + ATP = O-phospho-L-seryl-[protein] + ADP + H(+). The enzyme catalyses L-threonyl-[protein] + ATP = O-phospho-L-threonyl-[protein] + ADP + H(+). It carries out the reaction L-tyrosyl-[protein] + ATP = O-phospho-L-tyrosyl-[protein] + ADP + H(+). The sequence is that of Putative dual specificity tyrosine-phosphorylation-regulated kinase 3 homolog (Dyrk3) from Drosophila melanogaster (Fruit fly).